We begin with the raw amino-acid sequence, 154 residues long: Transcriptional regulator MraZ (154 aa).

2 SpoVT-AbrB domains span residues 6-53 and 83-126; these read NSEA…PENV and VEVI…SKEI.

This sequence belongs to the MraZ family. In terms of assembly, forms oligomers.

It localises to the cytoplasm. The protein localises to the nucleoid. The protein is Transcriptional regulator MraZ of Phocaeicola vulgatus (strain ATCC 8482 / DSM 1447 / JCM 5826 / CCUG 4940 / NBRC 14291 / NCTC 11154) (Bacteroides vulgatus).